A 426-amino-acid chain; its full sequence is Adenylosuccinate synthetase (426 aa).

GTP contacts are provided by residues 13–19 and 41–43; these read GDEGKGK and GHT. D14 (proton acceptor) is an active-site residue. Positions 14 and 41 each coordinate Mg(2+). Residues 14 to 17, 39 to 42, T129, R143, Q224, T239, and R303 each bind IMP; these read DEGK and NAGH. H42 functions as the Proton donor in the catalytic mechanism. Residue 299–305 participates in substrate binding; the sequence is TTTGRPR. GTP contacts are provided by residues R305, 331–333, and 414–416; these read KLD and GTG.

It belongs to the adenylosuccinate synthetase family. Homodimer. Requires Mg(2+) as cofactor.

Its subcellular location is the cytoplasm. It catalyses the reaction IMP + L-aspartate + GTP = N(6)-(1,2-dicarboxyethyl)-AMP + GDP + phosphate + 2 H(+). The protein operates within purine metabolism; AMP biosynthesis via de novo pathway; AMP from IMP: step 1/2. In terms of biological role, plays an important role in the de novo pathway of purine nucleotide biosynthesis. Catalyzes the first committed step in the biosynthesis of AMP from IMP. This Caldicellulosiruptor bescii (strain ATCC BAA-1888 / DSM 6725 / KCTC 15123 / Z-1320) (Anaerocellum thermophilum) protein is Adenylosuccinate synthetase.